The primary structure comprises 701 residues: Sulfate anion transporter 1 (701 aa).

Residues 1–20 (MDESPEPLQQGRGPVPVRRQ) are disordered. The next 2 helical transmembrane spans lie at 68–90 (YLAG…AIAY) and 94–116 (AGLQ…FLMG). N-linked (GlcNAc...) asparagine glycans are attached at residues asparagine 158 and asparagine 163. 7 consecutive transmembrane segments (helical) span residues 176–198 (YAIR…MGVL), 255–277 (GAGQ…LLAA), 290–309 (VPLP…SHFG), 342–364 (ALDA…EMFA), 377–399 (LLAV…SAAL), 412–434 (TQLS…APLF), and 472–494 (LVWA…LAGV). Residues 527–687 (EFEGLVPEPG…LSVHDAVQTA (161 aa)) enclose the STAS domain.

This sequence belongs to the SLC26A/SulP transporter (TC 2.A.53) family. In terms of tissue distribution, expressed most abundantly in the kidney and liver, with lower levels in the pancreas, testis, brain, small intestine, colon, and lung.

It is found in the cell membrane. Its subcellular location is the basolateral cell membrane. It catalyses the reaction thiosulfate(in) + sulfate(out) = thiosulfate(out) + sulfate(in). It carries out the reaction 2 hydrogencarbonate(out) + sulfate(in) = 2 hydrogencarbonate(in) + sulfate(out). The enzyme catalyses oxalate(in) + sulfate(out) = oxalate(out) + sulfate(in). The catalysed reaction is oxalate(in) + 2 hydrogencarbonate(out) = oxalate(out) + 2 hydrogencarbonate(in). Sodium-independent sulfate anion transporter. Can transport other anions including bicarbonate, thiosulfate and oxalate by mediating sulfate-thiosulfate, sulfate-hydrogencarbonate and sulfate-oxalate anion exchange. Mediates oxalate-hydrogencarbonate anion exchange. The chain is Sulfate anion transporter 1 (SLC26A1) from Homo sapiens (Human).